A 266-amino-acid polypeptide reads, in one-letter code: DNA-directed RNA polymerase subunit Rpo3 (266 aa).

3 residues coordinate [3Fe-4S] cluster: Cys205, Cys208, and Cys211.

The protein belongs to the archaeal Rpo3/eukaryotic RPB3 RNA polymerase subunit family. Part of the RNA polymerase complex. [3Fe-4S] cluster serves as cofactor.

The protein resides in the cytoplasm. The enzyme catalyses RNA(n) + a ribonucleoside 5'-triphosphate = RNA(n+1) + diphosphate. DNA-dependent RNA polymerase (RNAP) catalyzes the transcription of DNA into RNA using the four ribonucleoside triphosphates as substrates. This Methanosarcina mazei (strain ATCC BAA-159 / DSM 3647 / Goe1 / Go1 / JCM 11833 / OCM 88) (Methanosarcina frisia) protein is DNA-directed RNA polymerase subunit Rpo3.